The chain runs to 989 residues: Mediator of RNA polymerase II transcription subunit 24 (989 aa).

6 consecutive short sequence motifs (LXXLL motif) follow at residues 343 to 347 (LTPLL), 359 to 363 (LSLLL), 447 to 451 (LDLLL), 556 to 560 (LVALL), 787 to 791 (LPRLL), and 857 to 861 (LMRLL).

Belongs to the Mediator complex subunit 24 family. As to quaternary structure, component of the Mediator complex.

The protein localises to the nucleus. Functionally, component of the Mediator complex, a coactivator involved in the regulated transcription of nearly all RNA polymerase II-dependent genes. Mediator functions as a bridge to convey information from gene-specific regulatory proteins to the basal RNA polymerase II transcription machinery. Mediator is recruited to promoters by direct interactions with regulatory proteins and serves as a scaffold for the assembly of a functional preinitiation complex with RNA polymerase II and the general transcription factors. Required for proliferation of enteric nervous system precursors. Required for the development of dopaminergic amacrine cells and rod photoreceptor cells in the retina. The chain is Mediator of RNA polymerase II transcription subunit 24 (med24) from Danio rerio (Zebrafish).